Here is a 432-residue protein sequence, read N- to C-terminus: Anaerobic glycerol-3-phosphate dehydrogenase subunit B (432 aa).

The protein belongs to the anaerobic G-3-P dehydrogenase subunit B family. In terms of assembly, composed of a catalytic GlpA/B dimer and of membrane bound GlpC. FMN serves as cofactor.

It catalyses the reaction a quinone + sn-glycerol 3-phosphate = dihydroxyacetone phosphate + a quinol. It participates in polyol metabolism; glycerol degradation via glycerol kinase pathway; glycerone phosphate from sn-glycerol 3-phosphate (anaerobic route): step 1/1. Functionally, conversion of glycerol 3-phosphate to dihydroxyacetone. Uses fumarate or nitrate as electron acceptor. The chain is Anaerobic glycerol-3-phosphate dehydrogenase subunit B from Haemophilus influenzae (strain PittGG).